A 291-amino-acid polypeptide reads, in one-letter code: ATP synthase gamma chain (291 aa).

This sequence belongs to the ATPase gamma chain family. As to quaternary structure, F-type ATPases have 2 components, CF(1) - the catalytic core - and CF(0) - the membrane proton channel. CF(1) has five subunits: alpha(3), beta(3), gamma(1), delta(1), epsilon(1). CF(0) has three main subunits: a, b and c.

Its subcellular location is the cell inner membrane. Produces ATP from ADP in the presence of a proton gradient across the membrane. The gamma chain is believed to be important in regulating ATPase activity and the flow of protons through the CF(0) complex. This chain is ATP synthase gamma chain, found in Cupriavidus pinatubonensis (strain JMP 134 / LMG 1197) (Cupriavidus necator (strain JMP 134)).